An 83-amino-acid polypeptide reads, in one-letter code: UPF0147 protein TK2131 (83 aa).

It belongs to the UPF0147 family.

This is UPF0147 protein TK2131 from Thermococcus kodakarensis (strain ATCC BAA-918 / JCM 12380 / KOD1) (Pyrococcus kodakaraensis (strain KOD1)).